Consider the following 710-residue polypeptide: Interleukin-1 receptor-associated kinase 1 (710 aa).

Residues 27 to 106 (MCRFYKVMDA…DIITAWHPPA (80 aa)) enclose the Death domain. At Thr-66 the chain carries Phosphothreonine; by PKC/PRKCI. The tract at residues 107–133 (PVVPPSTAAPRPSSISAGSEAGDWSPR) is disordered. Residues 110–211 (PPSTAAPRPS…FCEISQGTCN (102 aa)) are proST region. Low complexity predominate over residues 111-123 (PSTAAPRPSSISA). The residue at position 131 (Ser-131) is a Phosphoserine. Residues Lys-134 and Lys-180 each participate in a glycyl lysine isopeptide (Lys-Gly) (interchain with G-Cter in ubiquitin) cross-link. The segment at 169-190 (PPLPSSAPSSTKSSPESPVSGL) is disordered. Residues 174 to 188 (SAPSSTKSSPESPVS) show a composition bias toward low complexity. The residue at position 209 (Thr-209) is a Phosphothreonine; by IRAK4. The Protein kinase domain maps to 212 to 521 (FSEELRIGEG…TQVYKRLEGL (310 aa)). Residues 218–226 (IGEGGFGCV) and Lys-239 each bind ATP. Asp-340 acts as the Proton acceptor in catalysis. ATP-binding positions include 342 to 345 (KSSN) and Asp-358. The residue at position 375 (Ser-375) is a Phosphoserine. Thr-387 carries the post-translational modification Phosphothreonine. Disordered stretches follow at residues 527–655 (WELE…SEPP) and 689–710 (FPGL…EFQS). Polar residues predominate over residues 537–553 (PSPQENSYMSTTGSAQS). Ser-553 carries the post-translational modification Phosphoserine. A compositionally biased stretch (low complexity) spans 567–576 (APAQAAQQLQ). Over residues 616-639 (SCTQGGTTRESSVRSSPGFQPTTM) the composition is skewed to polar residues. Residues 640–654 (EGSPTGSSSLLSSEP) are compositionally biased toward low complexity.

Belongs to the protein kinase superfamily. TKL Ser/Thr protein kinase family. Pelle subfamily. In terms of assembly, homodimer. Forms a complex with TRAF6, PELI1, IRAK4 and MYD88. Direct binding of SMAD6 to PELI1 prevents complex formation and hence negatively regulates IL1R-TLR signaling and eventually NF-kappa-B-mediated gene expression. The TRAF6-PELI1-IRAK4-MYD88 complex recruits MAP3K7/TAK1, TAB1 and TAB2 to mediate NF-kappa-B activation. Interaction with MYD88 recruits IRAK1 to the stimulated receptor complex. Interacts with TOLLIP; this interaction occurs in the cytosol prior to receptor activation. Interacts with IL1RL1. Interacts (when polyubiquitinated) with IKBKG/NEMO. Interacts with RSAD2/viperin. Interacts with IRAK1BP1. Interacts with PELI2. Interacts with ZC3H12A; this interaction increases the interaction between ZC3H12A and IKBKB/IKKB. Interacts with IRAK4. Interacts with PELI3. Interacts with PELI1 and TRAF6. Interacts with INAVA; the interaction takes place upon PRR stimulation. Interacts (via C-terminus) with NFATC4 (via N-terminus). The cofactor is Mg(2+). In terms of processing, following recruitment on the activated receptor complex, phosphorylated on Thr-209, probably by IRAK4, resulting in a conformational change of the kinase domain, allowing further phosphorylations to take place. Thr-387 phosphorylation in the activation loop is required to achieve full enzymatic activity. Post-translationally, polyubiquitinated by TRAF6 after cell stimulation with IL-1-beta by PELI1, PELI2 and PELI3. Polyubiquitination occurs with polyubiquitin chains linked through 'Lys-63'. Ubiquitination promotes interaction with NEMO/IKBKG. Also sumoylated; leading to nuclear translocation. In terms of tissue distribution, highly expressed in liver, followed by kidney and skeletal muscle.

It is found in the cytoplasm. It localises to the nucleus. The protein localises to the lipid droplet. The catalysed reaction is L-seryl-[protein] + ATP = O-phospho-L-seryl-[protein] + ADP + H(+). It carries out the reaction L-threonyl-[protein] + ATP = O-phospho-L-threonyl-[protein] + ADP + H(+). In terms of biological role, serine/threonine-protein kinase that plays a critical role in initiating innate immune response against foreign pathogens. Involved in Toll-like receptor (TLR) and IL-1R signaling pathways. Is rapidly recruited by MYD88 to the receptor-signaling complex upon TLR activation. Association with MYD88 leads to IRAK1 phosphorylation by IRAK4 and subsequent autophosphorylation and kinase activation. Phosphorylates E3 ubiquitin ligases Pellino proteins (PELI1, PELI2 and PELI3) to promote pellino-mediated polyubiquitination of IRAK1. Then, the ubiquitin-binding domain of IKBKG/NEMO binds to polyubiquitinated IRAK1 bringing together the IRAK1-MAP3K7/TAK1-TRAF6 complex and the NEMO-IKKA-IKKB complex. In turn, MAP3K7/TAK1 activates IKKs (CHUK/IKKA and IKBKB/IKKB) leading to NF-kappa-B nuclear translocation and activation. Alternatively, phosphorylates TIRAP to promote its ubiquitination and subsequent degradation. Phosphorylates the interferon regulatory factor 7 (IRF7) to induce its activation and translocation to the nucleus, resulting in transcriptional activation of type I IFN genes, which drive the cell in an antiviral state. When sumoylated, translocates to the nucleus and phosphorylates STAT3. The protein is Interleukin-1 receptor-associated kinase 1 (Irak1) of Mus musculus (Mouse).